Here is a 512-residue protein sequence, read N- to C-terminus: Sugar transport protein MST7 (512 aa).

At 1-17 the chain is on the cytoplasmic side; it reads MENAGAGDGAPKHYPGK. The helical transmembrane segment at 18 to 38 threads the bilayer; it reads MTVFVFIACLVASSGGLIFGY. Residues 39–81 lie on the Extracellular side of the membrane; it reads DIGISGGVTSMDPFLSRFFPSVYAKEKEVVDTNQYCKFDSEPL. A helical transmembrane segment spans residues 82–102; the sequence is TLFTSSLYLAALIASLFASVI. The Cytoplasmic segment spans residues 103-116; sequence TRKLGRKMTMLGGG. The chain crosses the membrane as a helical span at residues 117 to 137; sequence FIFLIGAVLNGAAVNVAMLII. The Extracellular segment spans residues 138 to 139; sequence GR. A helical transmembrane segment spans residues 140–160; it reads ILLGIGVGFSIQAVPLYLSEM. Residues 161-166 lie on the Cytoplasmic side of the membrane; it reads APAKMR. The chain crosses the membrane as a helical span at residues 167–187; the sequence is GMLNIIFQLMITVGILFANLI. Over 188–201 the chain is Extracellular; sequence NYFTDKIAGGWGWR. The helical transmembrane segment at 202–222 threads the bilayer; that stretch reads VSLGLAAVPAVIMTVGSILLP. Over 223–294 the chain is Cytoplasmic; it reads DTPNSLLSRG…MSVLIPTLQQ (72 aa). A helical transmembrane segment spans residues 295–315; the sequence is LTGINVVMFYAPVLFKTIGFG. Residues 316–320 are Extracellular-facing; the sequence is GTASL. A helical membrane pass occupies residues 321–341; that stretch reads MSAVITGLVNMFATFVSIATV. Topologically, residues 342–347 are cytoplasmic; sequence DRFGRR. The helical transmembrane segment at 348–368 threads the bilayer; the sequence is VLFIQGGIQMIIAQFILGTLI. The Extracellular segment spans residues 369 to 385; that stretch reads AVKFGTAGVANISQGYA. Residues 386–406 traverse the membrane as a helical segment; the sequence is IVVVLFICLFVSAFAWSWGPL. Topologically, residues 407-425 are cytoplasmic; it reads GWLVPSEIFPLEIRSAAQS. Residues 426–446 form a helical membrane-spanning segment; that stretch reads VVVVFNMAFTFFIAQIFLMML. The Extracellular portion of the chain corresponds to 447–450; sequence CRLK. The chain crosses the membrane as a helical span at residues 451 to 471; that stretch reads FGLFFFFGAMELIMTGFVLVF. The Cytoplasmic portion of the chain corresponds to 472–512; sequence LPETKGIPIEEMDRIWGEHWYWSRFVGAGRNRVMQMASTNV.

It belongs to the major facilitator superfamily. Sugar transporter (TC 2.A.1.1) family.

It is found in the membrane. Mediates active uptake of hexoses by sugar:proton symport. In Oryza sativa subsp. japonica (Rice), this protein is Sugar transport protein MST7.